The primary structure comprises 329 residues: UDP-sugar transporter sqv-7 (329 aa).

9 helical membrane passes run 15–34, 41–63, 86–108, 129–151, 155–174, 187–209, 224–246, 253–275, and 280–302; these read SAVF…KILL, SFLF…AKMF, YFFN…FTVL, SKAV…IYDL, ALGY…LGVY, YGLM…QYTG, TSSV…YSLV, SALT…GMFS, and VFQW…YTYV.

It belongs to the TPT transporter family. SLC35D subfamily.

The protein localises to the golgi apparatus membrane. Functionally, acts as a transporter of UDP-glucuronic acid (UDP-GlcA), UDP-N-acetylgalactosamine (UDP-GalNAc) and UDP-galactose (UDP-Gal) from the cytoplasm into the Golgi lumen. Involved in the biosynthesis of glycoconjugates that play a pivotal role in development. Involved in the synthesis of chondroitin sulfate and heparan sulfate proteoglycans. Required for embryonic development. Involved in vulva epithelium invagination and embryonic development. Involved in the directed migration of hermaphrodite-specific neurons. The protein is UDP-sugar transporter sqv-7 (sqv-7) of Caenorhabditis elegans.